We begin with the raw amino-acid sequence, 419 residues long: Mitochondrial chaperone BCS1 (419 aa).

At 1–15 the chain is on the mitochondrial intermembrane side; sequence MPLSDFVLALKDNPY. A helical transmembrane segment spans residues 16-32; the sequence is FGAGFGLVGVGTALALA. Over 33–419 the chain is Mitochondrial matrix; that stretch reads RKGAQLGLVA…AIQNAESLRR (387 aa). Phosphotyrosine is present on Tyr181. Position 230-237 (230-237) interacts with ATP; it reads GPPGCGKS.

This sequence belongs to the AAA ATPase family. BCS1 subfamily. Interacts with LETM1.

Its subcellular location is the mitochondrion inner membrane. It catalyses the reaction ATP + H2O = ADP + phosphate + H(+). Its function is as follows. Chaperone necessary for the incorporation of Rieske iron-sulfur protein UQCRFS1 into the mitochondrial respiratory chain complex III. Plays an important role in the maintenance of mitochondrial tubular networks, respiratory chain assembly and formation of the LETM1 complex. In Bos taurus (Bovine), this protein is Mitochondrial chaperone BCS1 (BCS1L).